The primary structure comprises 188 residues: Pyridoxal 5'-phosphate synthase subunit PdxT (188 aa).

Residue Gly47–Ser49 participates in L-glutamine binding. The Nucleophile role is filled by Cys79. Residues Arg105 and Ile134–Arg135 each bind L-glutamine. Residues His170 and Glu172 each act as charge relay system in the active site.

This sequence belongs to the glutaminase PdxT/SNO family. As to quaternary structure, in the presence of PdxS, forms a dodecamer of heterodimers. Only shows activity in the heterodimer.

The catalysed reaction is aldehydo-D-ribose 5-phosphate + D-glyceraldehyde 3-phosphate + L-glutamine = pyridoxal 5'-phosphate + L-glutamate + phosphate + 3 H2O + H(+). It catalyses the reaction L-glutamine + H2O = L-glutamate + NH4(+). The protein operates within cofactor biosynthesis; pyridoxal 5'-phosphate biosynthesis. Its function is as follows. Catalyzes the hydrolysis of glutamine to glutamate and ammonia as part of the biosynthesis of pyridoxal 5'-phosphate. The resulting ammonia molecule is channeled to the active site of PdxS. The protein is Pyridoxal 5'-phosphate synthase subunit PdxT of Listeria monocytogenes serovar 1/2a (strain ATCC BAA-679 / EGD-e).